Reading from the N-terminus, the 287-residue chain is Cyclopropane mycolic acid synthase MmaA2 (287 aa).

S-adenosyl-L-methionine contacts are provided by residues Y33 to S34, G72 to G74, T94 to Q99, W123 to E124, and I136. C269 is an active-site residue.

Belongs to the CFA/CMAS family.

It catalyses the reaction a 1-acyl-2-(9Z)-enoyl-sn-glycero-3-phospholipid + S-adenosyl-L-methionine = a 1-acyl-2-(9-cyclopronane)-acyl-sn-glycero-3-phospholipid + S-adenosyl-L-homocysteine + H(+). It functions in the pathway lipid metabolism; mycolic acid biosynthesis. Its function is as follows. Catalyzes the conversion of a double bond to a cis cyclopropane ring at the distal position of an alpha mycolic acid via the transfer of a methylene group from S-adenosyl-L-methionine. MmaA2 also catalyzes the biosynthesis of the cis-cyclopropanated methoxymycolates. Cyclopropanated mycolic acids are key factors participating in cell envelope permeability, host immunomodulation and persistence. The protein is Cyclopropane mycolic acid synthase MmaA2 (mmaA2) of Mycobacterium tuberculosis (strain ATCC 25177 / H37Ra).